Reading from the N-terminus, the 462-residue chain is uncharacterized protein (462 aa).

2 helical membrane-spanning segments follow: residues 12-32 (WWWL…APTV) and 257-277 (GLCV…LELV).

This sequence belongs to the HHV-5 US29 protein family.

It localises to the host membrane. This is an uncharacterized protein from Homo sapiens (Human).